A 212-amino-acid polypeptide reads, in one-letter code: Large ribosomal subunit protein uL1 (212 aa).

It belongs to the universal ribosomal protein uL1 family. As to quaternary structure, part of the 50S ribosomal subunit.

Functionally, binds directly to 23S rRNA. Probably involved in E site tRNA release. In terms of biological role, protein L1 is also a translational repressor protein, it controls the translation of its operon by binding to its mRNA. The polypeptide is Large ribosomal subunit protein uL1 (Haloquadratum walsbyi (strain DSM 16790 / HBSQ001)).